The chain runs to 447 residues: Lipid II isoglutaminyl synthase (glutamine-hydrolyzing) subunit MurT (447 aa).

Zn(2+)-binding residues include cysteine 205, cysteine 208, cysteine 227, and cysteine 230. The active site involves aspartate 355.

This sequence belongs to the MurCDEF family. MurT subfamily. Forms a heterodimer with GatD.

It carries out the reaction beta-D-GlcNAc-(1-&gt;4)-Mur2Ac(oyl-L-Ala-gamma-D-Glu-L-Lys-D-Ala-D-Ala)-di-trans,octa-cis-undecaprenyl diphosphate + L-glutamine + ATP + H2O = beta-D-GlcNAc-(1-&gt;4)-Mur2Ac(oyl-L-Ala-D-isoglutaminyl-L-Lys-D-Ala-D-Ala)-di-trans,octa-cis-undecaprenyl diphosphate + L-glutamate + ADP + phosphate + H(+). The enzyme catalyses beta-D-GlcNAc-(1-&gt;4)-Mur2Ac(oyl-L-Ala-gamma-D-Glu-L-Lys-D-Ala-D-Ala)-di-trans,octa-cis-undecaprenyl diphosphate + ATP = beta-D-GlcNAc-(1-&gt;4)-Mur2Ac(oyl-L-Ala-gamma-D-O-P-Glu-L-Lys-D-Ala-D-Ala)-di-trans,octa-cis-undecaprenyl diphosphate + ADP. It catalyses the reaction beta-D-GlcNAc-(1-&gt;4)-Mur2Ac(oyl-L-Ala-gamma-D-O-P-Glu-L-Lys-D-Ala-D-Ala)-di-trans,octa-cis-undecaprenyl diphosphate + NH4(+) = beta-D-GlcNAc-(1-&gt;4)-Mur2Ac(oyl-L-Ala-D-isoglutaminyl-L-Lys-D-Ala-D-Ala)-di-trans,octa-cis-undecaprenyl diphosphate + phosphate + H(+). It functions in the pathway cell wall biogenesis; peptidoglycan biosynthesis. In terms of biological role, the lipid II isoglutaminyl synthase complex catalyzes the formation of alpha-D-isoglutamine in the cell wall lipid II stem peptide. The MurT subunit catalyzes the ATP-dependent amidation of D-glutamate residue of lipid II, converting it to an isoglutamine residue. The sequence is that of Lipid II isoglutaminyl synthase (glutamine-hydrolyzing) subunit MurT from Streptococcus pneumoniae (strain ATCC BAA-255 / R6).